The sequence spans 299 residues: 4-hydroxy-tetrahydrodipicolinate synthase (299 aa).

A pyruvate-binding site is contributed by threonine 50. Tyrosine 139 acts as the Proton donor/acceptor in catalysis. The active-site Schiff-base intermediate with substrate is lysine 167. A pyruvate-binding site is contributed by valine 209.

The protein belongs to the DapA family. In terms of assembly, homotetramer; dimer of dimers.

Its subcellular location is the cytoplasm. It catalyses the reaction L-aspartate 4-semialdehyde + pyruvate = (2S,4S)-4-hydroxy-2,3,4,5-tetrahydrodipicolinate + H2O + H(+). It participates in amino-acid biosynthesis; L-lysine biosynthesis via DAP pathway; (S)-tetrahydrodipicolinate from L-aspartate: step 3/4. Its function is as follows. Catalyzes the condensation of (S)-aspartate-beta-semialdehyde [(S)-ASA] and pyruvate to 4-hydroxy-tetrahydrodipicolinate (HTPA). The protein is 4-hydroxy-tetrahydrodipicolinate synthase of Synechococcus elongatus (strain ATCC 33912 / PCC 7942 / FACHB-805) (Anacystis nidulans R2).